The following is a 516-amino-acid chain: Tyrosine decarboxylase 3 (516 aa).

Lysine 319 carries the post-translational modification N6-(pyridoxal phosphate)lysine.

This sequence belongs to the group II decarboxylase family. In terms of assembly, homodimer. Pyridoxal 5'-phosphate serves as cofactor.

The catalysed reaction is L-tyrosine + H(+) = tyramine + CO2. The sequence is that of Tyrosine decarboxylase 3 (TYRDC-3) from Petroselinum crispum (Parsley).